The primary structure comprises 238 residues: Pyridoxine 5'-phosphate synthase (238 aa).

Residue N7 participates in 3-amino-2-oxopropyl phosphate binding. 9 to 10 lines the 1-deoxy-D-xylulose 5-phosphate pocket; sequence DH. Residue R18 participates in 3-amino-2-oxopropyl phosphate binding. H43 (proton acceptor) is an active-site residue. Residues R45 and H50 each coordinate 1-deoxy-D-xylulose 5-phosphate. Catalysis depends on E70, which acts as the Proton acceptor. Residue T100 participates in 1-deoxy-D-xylulose 5-phosphate binding. H191 serves as the catalytic Proton donor. 3-amino-2-oxopropyl phosphate contacts are provided by residues G192 and 213-214; that span reads GH.

It belongs to the PNP synthase family. In terms of assembly, homooctamer; tetramer of dimers.

The protein localises to the cytoplasm. It catalyses the reaction 3-amino-2-oxopropyl phosphate + 1-deoxy-D-xylulose 5-phosphate = pyridoxine 5'-phosphate + phosphate + 2 H2O + H(+). It participates in cofactor biosynthesis; pyridoxine 5'-phosphate biosynthesis; pyridoxine 5'-phosphate from D-erythrose 4-phosphate: step 5/5. Its function is as follows. Catalyzes the complicated ring closure reaction between the two acyclic compounds 1-deoxy-D-xylulose-5-phosphate (DXP) and 3-amino-2-oxopropyl phosphate (1-amino-acetone-3-phosphate or AAP) to form pyridoxine 5'-phosphate (PNP) and inorganic phosphate. The protein is Pyridoxine 5'-phosphate synthase of Syntrophobacter fumaroxidans (strain DSM 10017 / MPOB).